The chain runs to 162 residues: Small ribosomal subunit protein uS19 (162 aa).

Positions 1–27 are enriched in basic residues; sequence MAKQKKFSGKGSARSKRKQNRKQVGPR. The disordered stretch occupies residues 1-29; it reads MAKQKKFSGKGSARSKRKQNRKQVGPRRR.

The protein belongs to the universal ribosomal protein uS19 family.

In terms of biological role, protein S19 forms a complex with S13 that binds strongly to the 16S ribosomal RNA. This is Small ribosomal subunit protein uS19 from Methanococcus aeolicus (strain ATCC BAA-1280 / DSM 17508 / OCM 812 / Nankai-3).